A 129-amino-acid chain; its full sequence is Histone H2A.2 (129 aa).

Residue Lys-5 is modified to N6-acetyllysine. Residue Gln-108 is modified to N5-methylglutamine.

The protein belongs to the histone H2A family. The nucleosome is a histone octamer containing two molecules each of H2A, H2B, H3 and H4 assembled in one H3-H4 heterotetramer and two H2A-H2B heterodimers. The octamer wraps approximately 147 bp of DNA. Acetylated by ESA1 to form H2AK4ac.

The protein resides in the nucleus. It localises to the chromosome. Core component of nucleosome which plays a central role in DNA double strand break (DSB) repair. Nucleosomes wrap and compact DNA into chromatin, limiting DNA accessibility to the cellular machineries which require DNA as a template. Histones thereby play a central role in transcription regulation, DNA repair, DNA replication and chromosomal stability. DNA accessibility is regulated via a complex set of post-translational modifications of histones, also called histone code, and nucleosome remodeling. This is Histone H2A.2 (HTA2) from Lodderomyces elongisporus (strain ATCC 11503 / CBS 2605 / JCM 1781 / NBRC 1676 / NRRL YB-4239) (Yeast).